A 360-amino-acid chain; its full sequence is Peptide chain release factor 1 (360 aa).

Glutamine 235 bears the N5-methylglutamine mark. A disordered region spans residues 285–313 (KRQQAEASTRRNLLGSGDRSDRNRTYNFP).

The protein belongs to the prokaryotic/mitochondrial release factor family. Methylated by PrmC. Methylation increases the termination efficiency of RF1.

The protein localises to the cytoplasm. Its function is as follows. Peptide chain release factor 1 directs the termination of translation in response to the peptide chain termination codons UAG and UAA. This is Peptide chain release factor 1 from Enterobacter sp. (strain 638).